The chain runs to 397 residues: Subtilisin-like protease 12 (397 aa).

A signal peptide spans 1–19 (MSIFKLMVIYFTLFWVVNA). Positions 20-116 (AQLLDLDSHG…VEPNREMKAA (97 aa)) are excised as a propeptide. Positions 35 to 115 (YIVVMKNGVS…FVEPNREMKA (81 aa)) constitute an Inhibitor I9 domain. N-linked (GlcNAc...) asparagine glycosylation is found at N123, N136, and N150. One can recognise a Peptidase S8 domain in the interval 125-397 (TWGLARISHM…DKLLYNGSGA (273 aa)). Active-site charge relay system residues include D157 and H188. N249, N305, and N334 each carry an N-linked (GlcNAc...) asparagine glycan. Residue S343 is the Charge relay system of the active site. N-linked (GlcNAc...) asparagine glycosylation is found at N385 and N393.

It belongs to the peptidase S8 family.

It localises to the secreted. In terms of biological role, secreted subtilisin-like serine protease with keratinolytic activity that contributes to pathogenicity. This chain is Subtilisin-like protease 12 (SUB12), found in Arthroderma gypseum (strain ATCC MYA-4604 / CBS 118893) (Microsporum gypseum).